The chain runs to 366 residues: Phospho-N-acetylmuramoyl-pentapeptide-transferase (366 aa).

Helical transmembrane passes span 27-47 (AALF…IASL), 71-91 (TPTM…LLWA), 93-113 (LSSI…AIGF), 138-158 (FVIA…AGAA), 174-194 (LMLN…VGAG), 205-225 (GLAI…AYLA), 245-265 (LAVI…FNAP), 268-288 (AIFM…TVAV), 297-317 (VIIG…VFWF), and 343-363 (QVVI…LSTL).

This sequence belongs to the glycosyltransferase 4 family. MraY subfamily. Mg(2+) is required as a cofactor.

The protein resides in the cell inner membrane. The enzyme catalyses UDP-N-acetyl-alpha-D-muramoyl-L-alanyl-gamma-D-glutamyl-meso-2,6-diaminopimeloyl-D-alanyl-D-alanine + di-trans,octa-cis-undecaprenyl phosphate = di-trans,octa-cis-undecaprenyl diphospho-N-acetyl-alpha-D-muramoyl-L-alanyl-D-glutamyl-meso-2,6-diaminopimeloyl-D-alanyl-D-alanine + UMP. It functions in the pathway cell wall biogenesis; peptidoglycan biosynthesis. In terms of biological role, catalyzes the initial step of the lipid cycle reactions in the biosynthesis of the cell wall peptidoglycan: transfers peptidoglycan precursor phospho-MurNAc-pentapeptide from UDP-MurNAc-pentapeptide onto the lipid carrier undecaprenyl phosphate, yielding undecaprenyl-pyrophosphoryl-MurNAc-pentapeptide, known as lipid I. This chain is Phospho-N-acetylmuramoyl-pentapeptide-transferase, found in Sinorhizobium medicae (strain WSM419) (Ensifer medicae).